The following is an 874-amino-acid chain: Valine--tRNA ligase (874 aa).

The 'HIGH' region signature appears at 42 to 52; it reads PNITGRIHIGH. Positions 522–526 match the 'KMSKS' region motif; the sequence is KMSKS. Lys-525 provides a ligand contact to ATP. Positions 806–874 form a coiled coil; it reads DYIDIDTEKQ…KLQALLKEIS (69 aa).

It belongs to the class-I aminoacyl-tRNA synthetase family. ValS type 1 subfamily. Monomer.

The protein resides in the cytoplasm. The enzyme catalyses tRNA(Val) + L-valine + ATP = L-valyl-tRNA(Val) + AMP + diphosphate. In terms of biological role, catalyzes the attachment of valine to tRNA(Val). As ValRS can inadvertently accommodate and process structurally similar amino acids such as threonine, to avoid such errors, it has a 'posttransfer' editing activity that hydrolyzes mischarged Thr-tRNA(Val) in a tRNA-dependent manner. In Petrotoga mobilis (strain DSM 10674 / SJ95), this protein is Valine--tRNA ligase.